Consider the following 224-residue polypeptide: 7-cyano-7-deazaguanine synthase (224 aa).

Cysteine 8–alanine 18 lines the ATP pocket. The Zn(2+) site is built by cysteine 190, cysteine 198, cysteine 201, and cysteine 204.

This sequence belongs to the QueC family. It depends on Zn(2+) as a cofactor.

It carries out the reaction 7-carboxy-7-deazaguanine + NH4(+) + ATP = 7-cyano-7-deazaguanine + ADP + phosphate + H2O + H(+). Its pathway is purine metabolism; 7-cyano-7-deazaguanine biosynthesis. Its function is as follows. Catalyzes the ATP-dependent conversion of 7-carboxy-7-deazaguanine (CDG) to 7-cyano-7-deazaguanine (preQ(0)). This chain is 7-cyano-7-deazaguanine synthase, found in Methanothrix thermoacetophila (strain DSM 6194 / JCM 14653 / NBRC 101360 / PT) (Methanosaeta thermophila).